The primary structure comprises 328 residues: GTP 3',8-cyclase (328 aa).

The Radical SAM core domain maps to 1–229 (MNTVDYLRIS…ESFVPGNGPA (229 aa)). Arg8 serves as a coordination point for GTP. Residues Cys15 and Cys19 each coordinate [4Fe-4S] cluster. Position 21 (Tyr21) interacts with S-adenosyl-L-methionine. Cys22 serves as a coordination point for [4Fe-4S] cluster. A GTP-binding site is contributed by Arg60. An S-adenosyl-L-methionine-binding site is contributed by Gly64. A GTP-binding site is contributed by Thr91. Ser115 contributes to the S-adenosyl-L-methionine binding site. Position 155 (Lys155) interacts with GTP. Residue Met189 participates in S-adenosyl-L-methionine binding. Cys252 and Cys255 together coordinate [4Fe-4S] cluster. Residue 257–259 (RMR) participates in GTP binding. Cys269 is a binding site for [4Fe-4S] cluster.

This sequence belongs to the radical SAM superfamily. MoaA family. In terms of assembly, monomer and homodimer. It depends on [4Fe-4S] cluster as a cofactor.

The catalysed reaction is GTP + AH2 + S-adenosyl-L-methionine = (8S)-3',8-cyclo-7,8-dihydroguanosine 5'-triphosphate + 5'-deoxyadenosine + L-methionine + A + H(+). It functions in the pathway cofactor biosynthesis; molybdopterin biosynthesis. Functionally, catalyzes the cyclization of GTP to (8S)-3',8-cyclo-7,8-dihydroguanosine 5'-triphosphate. This Trichodesmium erythraeum (strain IMS101) protein is GTP 3',8-cyclase.